A 197-amino-acid chain; its full sequence is C-type lectin domain family 3 member A (197 aa).

The first 22 residues, Met-1 to Ser-22, serve as a signal peptide directing secretion. 3 cysteine pairs are disulfide-bonded: Cys-68-Cys-78, Cys-95-Cys-191, and Cys-167-Cys-183. A C-type lectin domain is found at Val-74–Glu-192.

Restricted to cartilage and breast. Also expressed in breast cancers.

It localises to the secreted. Functionally, promotes cell adhesion to laminin-332 and fibronectin. This is C-type lectin domain family 3 member A (CLEC3A) from Homo sapiens (Human).